The primary structure comprises 356 residues: Cyclin-dependent kinase 5 activator 1 (356 aa).

Disordered stretches follow at residues 1–53 and 66–99; these read MGAN…AKES and IQPVMSRRSLPKSGSSSEATSSKSSDSLVSFTRN. 2 stretches are compositionally biased toward low complexity: residues 40 to 49 and 71 to 92; these read SNTSSRSSSN and SRRSLPKSGSSSEATSSKSSDS.

This sequence belongs to the cyclin-dependent kinase 5 activator family. In terms of assembly, heterodimer composed of a catalytic subunit cdk-5 and a regulatory subunit cdka-1. Interaction with cdka-1 is required for cdk-5 activation. As to expression, expressed in all classes of neurons in the ventral cord.

The protein localises to the cytoplasm. It is found in the cell projection. Its subcellular location is the dendrite. It localises to the axon. Activator of the kinase cdk-5. In several motor neurons, promotes the polarized trafficking of synaptic vesicles and dense-core vesicles. In the ventral nerve cord, regulates the synaptic localization of the glutamate receptor, glr-1. In DA motor neurons, regulates axonal transport of synaptic vesicle precursors by inhibiting dynein-mediated retrograde transport. Regulates the polarized distribution of dense-core vesicles in DB motor neurons. May regulate these processes in association with cdk-5. May also play a role in GABAergic synaptic vesicle localization in the ventral nerve cord. The protein is Cyclin-dependent kinase 5 activator 1 of Caenorhabditis elegans.